Here is a 246-residue protein sequence, read N- to C-terminus: V-type proton ATPase subunit D (246 aa).

It belongs to the V-ATPase D subunit family. V-ATPase is a heteromultimeric enzyme made up of two complexes: the ATP-hydrolytic V1 complex and the proton translocation V0 complex. The V1 complex consists of three catalytic AB heterodimers that form a heterohexamer, three peripheral stalks each consisting of EG heterodimers, one central rotor including subunits D and F, and the regulatory subunits C and H. The proton translocation complex V0 consists of the proton transport subunit a, a ring of proteolipid subunits c9c'', rotary subunit d, subunits e and f, and the accessory subunits VhaAC45 and ATP6AP2.

In terms of biological role, subunit of the V1 complex of vacuolar(H+)-ATPase (V-ATPase), a multisubunit enzyme composed of a peripheral complex (V1) that hydrolyzes ATP and a membrane integral complex (V0) that translocates protons. V-ATPase is responsible for acidifying and maintaining the pH of intracellular compartments and in some cell types, is targeted to the plasma membrane, where it is responsible for acidifying the extracellular environment. The chain is V-type proton ATPase subunit D from Manduca sexta (Tobacco hawkmoth).